The following is a 658-amino-acid chain: UvrABC system protein B (658 aa).

One can recognise a Helicase ATP-binding domain in the interval 26–413 (EGINSGKKKQ…SPEVIEQIIR (388 aa)). An ATP-binding site is contributed by 39–46 (GATGTGKT). The Beta-hairpin motif lies at 92–115 (YYDYYQPEAYVPQTDTFIEKDAQI). The Helicase C-terminal domain maps to 430–596 (QIDDLLGEIQ…TIQKGVRDVI (167 aa)). Residues 622-657 (EKTIAKMEAEMKEAAKALDFERAAELRDLLLELKAE) enclose the UVR domain.

This sequence belongs to the UvrB family. As to quaternary structure, forms a heterotetramer with UvrA during the search for lesions. Interacts with UvrC in an incision complex.

It localises to the cytoplasm. In terms of biological role, the UvrABC repair system catalyzes the recognition and processing of DNA lesions. A damage recognition complex composed of 2 UvrA and 2 UvrB subunits scans DNA for abnormalities. Upon binding of the UvrA(2)B(2) complex to a putative damaged site, the DNA wraps around one UvrB monomer. DNA wrap is dependent on ATP binding by UvrB and probably causes local melting of the DNA helix, facilitating insertion of UvrB beta-hairpin between the DNA strands. Then UvrB probes one DNA strand for the presence of a lesion. If a lesion is found the UvrA subunits dissociate and the UvrB-DNA preincision complex is formed. This complex is subsequently bound by UvrC and the second UvrB is released. If no lesion is found, the DNA wraps around the other UvrB subunit that will check the other stand for damage. In Bacillus cereus (strain ATCC 14579 / DSM 31 / CCUG 7414 / JCM 2152 / NBRC 15305 / NCIMB 9373 / NCTC 2599 / NRRL B-3711), this protein is UvrABC system protein B.